Reading from the N-terminus, the 239-residue chain is Endoglucanase A (239 aa).

The signal sequence occupies residues 1–16; sequence MKLSMTLSLFAATAMG.

It belongs to the glycosyl hydrolase 12 (cellulase H) family.

It carries out the reaction Endohydrolysis of (1-&gt;4)-beta-D-glucosidic linkages in cellulose, lichenin and cereal beta-D-glucans.. Has carboxylmethylcellulase activity. The polypeptide is Endoglucanase A (cekA) (Aspergillus kawachii (strain NBRC 4308) (White koji mold)).